Consider the following 1128-residue polypeptide: Translation initiation factor IF-2 (1128 aa).

Positions 57 to 519 (NSDKQILSIN…KETTRQRQKR (463 aa)) are disordered. Positions 70–83 (NKKDNYKQNKEDKS) are enriched in basic and acidic residues. Residues 100 to 110 (KKQLLNKPLNK) are compositionally biased toward low complexity. Residues 120–146 (QLKNPNKPNIYNSSQSQANLTNQNTKS) are compositionally biased toward polar residues. The segment covering 147 to 158 (KPSEHFNKDKKT) has biased composition (basic and acidic residues). Low complexity predominate over residues 182–196 (KNINNNLKSNESSKN). Positions 201–214 (GDKRELSLKPDQNR) are enriched in basic and acidic residues. Composition is skewed to polar residues over residues 243 to 267 (KQNNKQNITFKQTVSNRPGTPNRPG) and 386 to 397 (AKTNNQKQNIES). A compositionally biased stretch (basic and acidic residues) spans 432–445 (RKDWDDSAKLEALR). The span at 499 to 519 (HKSTKQFKKKKKETTRQRQKR) shows a compositional bias: basic residues. The 173-residue stretch at 620–792 (KRPPVITVMG…ILLVSEVEDL (173 aa)) folds into the tr-type G domain. A G1 region spans residues 629–636 (GHVDHGKT). 629-636 (GHVDHGKT) is a GTP binding site. The segment at 654-658 (GITQH) is G2. Residues 679 to 682 (DTPG) are G3. GTP is bound by residues 679-683 (DTPGH) and 733-736 (NKID). Positions 733–736 (NKID) are G4. A G5 region spans residues 769 to 771 (SAI).

This sequence belongs to the TRAFAC class translation factor GTPase superfamily. Classic translation factor GTPase family. IF-2 subfamily.

The protein resides in the cytoplasm. In terms of biological role, one of the essential components for the initiation of protein synthesis. Protects formylmethionyl-tRNA from spontaneous hydrolysis and promotes its binding to the 30S ribosomal subunits. Also involved in the hydrolysis of GTP during the formation of the 70S ribosomal complex. This Prochlorococcus marinus (strain MIT 9312) protein is Translation initiation factor IF-2.